The sequence spans 79 residues: Ribonuclease P protein component 1 (79 aa).

The protein belongs to the eukaryotic/archaeal RNase P protein component 1 family. Consists of a catalytic RNA component and at least 4-5 protein subunits.

The protein localises to the cytoplasm. The enzyme catalyses Endonucleolytic cleavage of RNA, removing 5'-extranucleotides from tRNA precursor.. Its function is as follows. Part of ribonuclease P, a protein complex that generates mature tRNA molecules by cleaving their 5'-ends. The sequence is that of Ribonuclease P protein component 1 from Saccharolobus solfataricus (strain ATCC 35092 / DSM 1617 / JCM 11322 / P2) (Sulfolobus solfataricus).